The sequence spans 314 residues: Acetyl-coenzyme A carboxylase carboxyl transferase subunit beta (314 aa).

In terms of domain architecture, CoA carboxyltransferase N-terminal spans 37–307 (LWQKCPACDA…MSLPALEPTY (271 aa)). Residues C41, C44, C60, and C63 each contribute to the Zn(2+) site. The C4-type zinc-finger motif lies at 41–63 (CPACDALTYTKDLQQNWQVCPSC).

This sequence belongs to the AccD/PCCB family. In terms of assembly, acetyl-CoA carboxylase is a heterohexamer composed of biotin carboxyl carrier protein (AccB), biotin carboxylase (AccC) and two subunits each of ACCase subunit alpha (AccA) and ACCase subunit beta (AccD). The cofactor is Zn(2+).

The protein localises to the cytoplasm. It carries out the reaction N(6)-carboxybiotinyl-L-lysyl-[protein] + acetyl-CoA = N(6)-biotinyl-L-lysyl-[protein] + malonyl-CoA. It participates in lipid metabolism; malonyl-CoA biosynthesis; malonyl-CoA from acetyl-CoA: step 1/1. Its function is as follows. Component of the acetyl coenzyme A carboxylase (ACC) complex. Biotin carboxylase (BC) catalyzes the carboxylation of biotin on its carrier protein (BCCP) and then the CO(2) group is transferred by the transcarboxylase to acetyl-CoA to form malonyl-CoA. The polypeptide is Acetyl-coenzyme A carboxylase carboxyl transferase subunit beta (Synechococcus sp. (strain JA-3-3Ab) (Cyanobacteria bacterium Yellowstone A-Prime)).